We begin with the raw amino-acid sequence, 512 residues long: MLLARLAQVSREVAATSARSRKTVLLAELFREAEAADVPVVIPYLAGRLPQGRIGVGWKVLSRRVPPADAPTLTVRDVDARLTRLGAVSGAGSQAERTRLVGELMGAATEDEQRFLIGLLTGEVRQGALDAAAVEGLAAATDAPPADVRRAVMLAGSLQTVAEALLADGPGALDRFRLTVGQPVLPMLAHSASSVAEAVGKLGAAAVEEKLDGIRVQVHRDGGTVRIYTRTLDDITDRLPEVTEAALALPGERFILDGEAISLDADGRPRSFQETAGRVGSRTDVATAARAVPVSAVFFDVLSVDGRDLLDLPLTERHAELARLVPEPLRVRRTLVHGPEDTGAAEEFLARTLARGHEGVVVKGLDAAYSAGRRGASWLKVKPVHTLDLVVLAAEWGHGRRTGKLSNLHLGARTADGSFAMLGKTFKGMTDALLTWQTERLKELAVEEHGWGVTVRPELVVEIAYDGLQRSTRYPAGVTLRFARVVRYREDKRPEDADTVDTLLAAHPGVAP.

E208 serves as a coordination point for ATP. The active-site N6-AMP-lysine intermediate is the K210. Residues R215, R230, E259, F299, R374, and K380 each contribute to the ATP site.

This sequence belongs to the ATP-dependent DNA ligase family. The cofactor is Mg(2+).

It carries out the reaction ATP + (deoxyribonucleotide)n-3'-hydroxyl + 5'-phospho-(deoxyribonucleotide)m = (deoxyribonucleotide)n+m + AMP + diphosphate.. Its function is as follows. DNA ligase that seals nicks in double-stranded DNA during DNA replication, DNA recombination and DNA repair. The sequence is that of Probable DNA ligase from Streptomyces coelicolor (strain ATCC BAA-471 / A3(2) / M145).